Consider the following 229-residue polypeptide: 7-cyano-7-deazaguanine synthase (229 aa).

15 to 25 (LSGGLDSTTCL) serves as a coordination point for ATP. 4 residues coordinate Zn(2+): Cys192, Cys202, Cys205, and Cys208.

It belongs to the QueC family. The cofactor is Zn(2+).

The enzyme catalyses 7-carboxy-7-deazaguanine + NH4(+) + ATP = 7-cyano-7-deazaguanine + ADP + phosphate + H2O + H(+). It participates in purine metabolism; 7-cyano-7-deazaguanine biosynthesis. Catalyzes the ATP-dependent conversion of 7-carboxy-7-deazaguanine (CDG) to 7-cyano-7-deazaguanine (preQ(0)). This chain is 7-cyano-7-deazaguanine synthase, found in Acinetobacter baylyi (strain ATCC 33305 / BD413 / ADP1).